The following is an 80-amino-acid chain: Putative defensin-like protein 28 (80 aa).

The signal sequence occupies residues 1 to 22 (MLRANVVVSLVIFAALMQCMNG).

The protein belongs to the DEFL family.

It localises to the secreted. The chain is Putative defensin-like protein 28 from Arabidopsis thaliana (Mouse-ear cress).